The sequence spans 199 residues: GTP cyclohydrolase-2 (199 aa).

50-54 (RIHSE) contributes to the GTP binding site. The Zn(2+) site is built by cysteine 55, cysteine 66, and cysteine 68. GTP is bound by residues glutamine 71, 93 to 95 (EGR), and threonine 115. Aspartate 127 (proton acceptor) is an active-site residue. Residue arginine 129 is the Nucleophile of the active site. GTP contacts are provided by threonine 150 and lysine 155.

Belongs to the GTP cyclohydrolase II family. Homodimer. The cofactor is Zn(2+).

It catalyses the reaction GTP + 4 H2O = 2,5-diamino-6-hydroxy-4-(5-phosphoribosylamino)-pyrimidine + formate + 2 phosphate + 3 H(+). Its pathway is cofactor biosynthesis; riboflavin biosynthesis; 5-amino-6-(D-ribitylamino)uracil from GTP: step 1/4. Catalyzes the conversion of GTP to 2,5-diamino-6-ribosylamino-4(3H)-pyrimidinone 5'-phosphate (DARP), formate and pyrophosphate. This chain is GTP cyclohydrolase-2, found in Buchnera aphidicola subsp. Baizongia pistaciae (strain Bp).